The chain runs to 76 residues: Small ribosomal subunit protein bS18 (76 aa).

Belongs to the bacterial ribosomal protein bS18 family. As to quaternary structure, part of the 30S ribosomal subunit. Forms a tight heterodimer with protein bS6.

Its function is as follows. Binds as a heterodimer with protein bS6 to the central domain of the 16S rRNA, where it helps stabilize the platform of the 30S subunit. This chain is Small ribosomal subunit protein bS18, found in Psychrobacter arcticus (strain DSM 17307 / VKM B-2377 / 273-4).